A 234-amino-acid chain; its full sequence is Probable transcriptional regulatory protein MYCGA1330 (234 aa).

It belongs to the TACO1 family.

Its subcellular location is the cytoplasm. This chain is Probable transcriptional regulatory protein MYCGA1330, found in Mycoplasmoides gallisepticum (strain R(low / passage 15 / clone 2)) (Mycoplasma gallisepticum).